We begin with the raw amino-acid sequence, 352 residues long: UDP-3-O-acylglucosamine N-acyltransferase (352 aa).

The active-site Proton acceptor is the H257.

Belongs to the transferase hexapeptide repeat family. LpxD subfamily. In terms of assembly, homotrimer.

The catalysed reaction is a UDP-3-O-[(3R)-3-hydroxyacyl]-alpha-D-glucosamine + a (3R)-hydroxyacyl-[ACP] = a UDP-2-N,3-O-bis[(3R)-3-hydroxyacyl]-alpha-D-glucosamine + holo-[ACP] + H(+). The protein operates within bacterial outer membrane biogenesis; LPS lipid A biosynthesis. Its function is as follows. Catalyzes the N-acylation of UDP-3-O-acylglucosamine using 3-hydroxyacyl-ACP as the acyl donor. Is involved in the biosynthesis of lipid A, a phosphorylated glycolipid that anchors the lipopolysaccharide to the outer membrane of the cell. The polypeptide is UDP-3-O-acylglucosamine N-acyltransferase (Methylobacterium nodulans (strain LMG 21967 / CNCM I-2342 / ORS 2060)).